The following is a 445-amino-acid chain: Probable phosphoglucosamine mutase (445 aa).

The active-site Phosphoserine intermediate is serine 99. The Mg(2+) site is built by serine 99, aspartate 238, aspartate 240, and aspartate 242. At serine 99 the chain carries Phosphoserine.

This sequence belongs to the phosphohexose mutase family. The cofactor is Mg(2+). Post-translationally, activated by phosphorylation.

The enzyme catalyses alpha-D-glucosamine 1-phosphate = D-glucosamine 6-phosphate. Its function is as follows. Catalyzes the conversion of glucosamine-6-phosphate to glucosamine-1-phosphate. The polypeptide is Probable phosphoglucosamine mutase (Methanobrevibacter smithii (strain ATCC 35061 / DSM 861 / OCM 144 / PS)).